The sequence spans 599 residues: Aspartate--tRNA(Asp/Asn) ligase (599 aa).

L-aspartate is bound at residue E172. The interval 196–199 (QLFK) is aspartate. Residue R218 coordinates L-aspartate. Residues 218–220 (RDE) and Q227 contribute to the ATP site. Position 454 (H454) interacts with L-aspartate. An ATP-binding site is contributed by E488. R495 contacts L-aspartate. 540–543 (GLDR) is an ATP binding site.

Belongs to the class-II aminoacyl-tRNA synthetase family. Type 1 subfamily. As to quaternary structure, homodimer.

It localises to the cytoplasm. It catalyses the reaction tRNA(Asx) + L-aspartate + ATP = L-aspartyl-tRNA(Asx) + AMP + diphosphate. Aspartyl-tRNA synthetase with relaxed tRNA specificity since it is able to aspartylate not only its cognate tRNA(Asp) but also tRNA(Asn). Reaction proceeds in two steps: L-aspartate is first activated by ATP to form Asp-AMP and then transferred to the acceptor end of tRNA(Asp/Asn). This Methylibium petroleiphilum (strain ATCC BAA-1232 / LMG 22953 / PM1) protein is Aspartate--tRNA(Asp/Asn) ligase.